Here is a 501-residue protein sequence, read N- to C-terminus: Orsellinic acid/F9775 biosynthesis cluster protein D (501 aa).

Residues 137–189 are disordered; the sequence is EVTPTTEDEDDEENESENDEEEGDVDLEEQEDDNGGRQSTTVTTSPGPSAPSV. The span at 142 to 169 shows a compositional bias: acidic residues; sequence TEDEDDEENESENDEEEGDVDLEEQEDD. Residues 172 to 183 are compositionally biased toward polar residues; it reads GRQSTTVTTSPG.

Functionally, part of the gene cluster that mediates the biosynthesis of orsellinic acid, as well as of the cathepsin K inhibitors F9775 A and F9775 B. The non-reducing polyketide synthase orsA produces orsellinic acid by condensing acetyl-CoA with 3 malonyl-CoA units. Further modifications by the decarboxylase orsB and the tyrosinase-like protein orsC lead to the production of F9775 A and F9775 B. The functions of orsD and orsE remain unclear since only orsB and orsC are required to convert orsellinic acid into F9775 A and F9775 B. The polypeptide is Orsellinic acid/F9775 biosynthesis cluster protein D (Emericella nidulans (strain FGSC A4 / ATCC 38163 / CBS 112.46 / NRRL 194 / M139) (Aspergillus nidulans)).